The sequence spans 492 residues: RNA-binding protein Nova-2 (492 aa).

The Bipartite nuclear localization signal motif lies at 10-26 (KRPLETPPEVVCTKRSN). Positions 32 to 99 (EYFLKVLIPS…EALNAVHSFI (68 aa)) constitute a KH 1 domain. Residue lysine 112 forms a Glycyl lysine isopeptide (Lys-Gly) (interchain with G-Cter in SUMO2) linkage. 2 consecutive KH domains span residues 130-196 (AKQA…VSAI) and 406-473 (KELV…QYLI).

Interacts with PTBP2; the interaction is direct. In terms of tissue distribution, brain. Expression restricted to astrocytes.

It is found in the nucleus. Functions to regulate alternative splicing in neurons by binding pre-mRNA in a sequence-specific manner to activate exon inclusion or exclusion. It binds specifically to the sequences 5'-YCAY-3' and regulates splicing in only a subset of regulated exons. Binding to an exonic 5'-YCAY-3' cluster changes the protein complexes assembled on pre-mRNA, blocking U1 snRNP binding and exon inclusion, whereas binding to an intronic 5'-YCAY-3' cluster enhances spliceosome assembly and exon inclusion. With NOVA1, they perform unique biological functions in different brain areas and cell types. Uniquely regulates alternative splicing events of a series of axon guidance related genes during cortical development, being essential for central nervous system development by regulating neural networks wiring. Regulates differentially alternative splicing on the same transcripts expressed in different neurons. This includes functional differences in transcripts expressed in cortical and cerebellar excitatory versus inhibitory neurons where is required for, respectively, development of laminar structure and motor coordination and synapse formation. Also the regulation the regulation of intron retention can sequester the trans-acting splicing factor PTBP2, acting as a variable cis-acting scaffolding platform for PTBP2 across various natural conditions. This is RNA-binding protein Nova-2 from Homo sapiens (Human).